A 765-amino-acid polypeptide reads, in one-letter code: 5-methyltetrahydropteroyltriglutamate--homocysteine methyltransferase (765 aa).

5-methyltetrahydropteroyltri-L-glutamate is bound by residues 18-21 (REWK) and lysine 114. L-homocysteine-binding positions include 437–439 (IGS) and glutamate 490. L-methionine is bound by residues 437–439 (IGS) and glutamate 490. Tryptophan 567 is a binding site for 5-methyltetrahydropteroyltri-L-glutamate. Aspartate 605 contacts L-homocysteine. Residue aspartate 605 coordinates L-methionine. Glutamate 611 lines the 5-methyltetrahydropteroyltri-L-glutamate pocket. Zn(2+) is bound by residues histidine 647, cysteine 649, and glutamate 671. Residue histidine 700 is the Proton donor of the active site. Cysteine 732 serves as a coordination point for Zn(2+).

It belongs to the vitamin-B12 independent methionine synthase family. Zn(2+) is required as a cofactor.

It carries out the reaction 5-methyltetrahydropteroyltri-L-glutamate + L-homocysteine = tetrahydropteroyltri-L-glutamate + L-methionine. The protein operates within amino-acid biosynthesis; L-methionine biosynthesis via de novo pathway; L-methionine from L-homocysteine (MetE route): step 1/1. In terms of biological role, catalyzes the transfer of a methyl group from 5-methyltetrahydrofolate to homocysteine resulting in methionine formation. The polypeptide is 5-methyltetrahydropteroyltriglutamate--homocysteine methyltransferase (Listeria innocua serovar 6a (strain ATCC BAA-680 / CLIP 11262)).